A 432-amino-acid chain; its full sequence is Casein kinase II subunit alpha-4, chloroplastic (432 aa).

The transit peptide at 1–55 (MALRPCTGFTISSLRNASAANNNLFSLLSFSSSSPAKRNLLLSSLQDNLRRFASS) directs the protein to the chloroplast. Residues 63-83 (LRNQQQQHQQQQQSRVKEKSE) are disordered. Over residues 66–75 (QQQQHQQQQQ) the composition is skewed to low complexity. Residues 132-417 (YEVVRKVGRG…AKEAMAHPYF (286 aa)) enclose the Protein kinase domain. Residues 138–146 (VGRGKYSEV) and Lys-161 contribute to the ATP site. The active-site Proton acceptor is Asp-249.

The protein belongs to the protein kinase superfamily. Ser/Thr protein kinase family. CK2 subfamily. In terms of assembly, tetramer of two alpha and two beta chains. Expressed in root tips, lateral root primordia, cotyledons, leaf primordia, sepals, filaments, stigma, and anthers.

The protein localises to the plastid. The protein resides in the chloroplast. It carries out the reaction L-seryl-[protein] + ATP = O-phospho-L-seryl-[protein] + ADP + H(+). The enzyme catalyses L-threonyl-[protein] + ATP = O-phospho-L-threonyl-[protein] + ADP + H(+). Casein kinases are operationally defined by their preferential utilization of acidic proteins such as caseins as substrates. The alpha chain contains the catalytic site. Involved in the regulation of various developmental processes. Involved in the regulation of plant growth and flowering time. Involved in retrograde signaling in plant responses to abscisic acid (ABA) and heat stress. May act as an enhancing factor in abiotic stress signaling through modulation of the expression of some molecular players in retrograde signaling. Phosphorylates RuBisCo activase (RCA) at Thr-78. The polypeptide is Casein kinase II subunit alpha-4, chloroplastic (Arabidopsis thaliana (Mouse-ear cress)).